Consider the following 344-residue polypeptide: UDP-3-O-acylglucosamine N-acyltransferase (344 aa).

His-248 (proton acceptor) is an active-site residue.

Belongs to the transferase hexapeptide repeat family. LpxD subfamily. As to quaternary structure, homotrimer.

The enzyme catalyses a UDP-3-O-[(3R)-3-hydroxyacyl]-alpha-D-glucosamine + a (3R)-hydroxyacyl-[ACP] = a UDP-2-N,3-O-bis[(3R)-3-hydroxyacyl]-alpha-D-glucosamine + holo-[ACP] + H(+). Its pathway is bacterial outer membrane biogenesis; LPS lipid A biosynthesis. In terms of biological role, catalyzes the N-acylation of UDP-3-O-acylglucosamine using 3-hydroxyacyl-ACP as the acyl donor. Is involved in the biosynthesis of lipid A, a phosphorylated glycolipid that anchors the lipopolysaccharide to the outer membrane of the cell. In Prochlorococcus marinus subsp. pastoris (strain CCMP1986 / NIES-2087 / MED4), this protein is UDP-3-O-acylglucosamine N-acyltransferase.